Reading from the N-terminus, the 170-residue chain is NADH-quinone oxidoreductase subunit B (170 aa).

Residues C46, C47, C111, and C141 each coordinate [4Fe-4S] cluster.

Belongs to the complex I 20 kDa subunit family. NDH-1 is composed of 14 different subunits. Subunits NuoB, C, D, E, F, and G constitute the peripheral sector of the complex. Requires [4Fe-4S] cluster as cofactor.

The protein resides in the cell membrane. The enzyme catalyses a quinone + NADH + 5 H(+)(in) = a quinol + NAD(+) + 4 H(+)(out). Its function is as follows. NDH-1 shuttles electrons from NADH, via FMN and iron-sulfur (Fe-S) centers, to quinones in the respiratory chain. The immediate electron acceptor for the enzyme in this species is believed to be a menaquinone. Couples the redox reaction to proton translocation (for every two electrons transferred, four hydrogen ions are translocated across the cytoplasmic membrane), and thus conserves the redox energy in a proton gradient. This is NADH-quinone oxidoreductase subunit B from Geobacillus sp. (strain WCH70).